The chain runs to 449 residues: UDP-N-acetylmuramoylalanine--D-glutamate ligase (449 aa).

Residue Gly118–Thr124 coordinates ATP.

Belongs to the MurCDEF family.

It localises to the cytoplasm. The enzyme catalyses UDP-N-acetyl-alpha-D-muramoyl-L-alanine + D-glutamate + ATP = UDP-N-acetyl-alpha-D-muramoyl-L-alanyl-D-glutamate + ADP + phosphate + H(+). It participates in cell wall biogenesis; peptidoglycan biosynthesis. Its function is as follows. Cell wall formation. Catalyzes the addition of glutamate to the nucleotide precursor UDP-N-acetylmuramoyl-L-alanine (UMA). This chain is UDP-N-acetylmuramoylalanine--D-glutamate ligase, found in Staphylococcus aureus (strain MW2).